Here is a 391-residue protein sequence, read N- to C-terminus: Glycerol-3-phosphate dehydrogenase [NAD(+)] (391 aa).

NAD(+)-binding positions include 46–51 (GSGNWG), F78, and F134. K157 serves as a coordination point for substrate. A190 is a binding site for NAD(+). K250 (proton acceptor) is an active-site residue. Residues R315 and Q344 each contribute to the NAD(+) site. Substrate is bound at residue 315-316 (RN).

Belongs to the NAD-dependent glycerol-3-phosphate dehydrogenase family.

It carries out the reaction sn-glycerol 3-phosphate + NAD(+) = dihydroxyacetone phosphate + NADH + H(+). The chain is Glycerol-3-phosphate dehydrogenase [NAD(+)] (GPD) from Candida tropicalis (Yeast).